The chain runs to 269 residues: Surfeit locus protein 4 (269 aa).

A run of 5 helical transmembrane segments spans residues Phe-64–Ile-84, Tyr-92–Trp-112, Phe-179–Phe-199, Leu-203–Trp-223, and Thr-242–Met-262. A Di-lysine motif motif is present at residues Lys-266 to Trp-269.

It belongs to the SURF4 family.

The protein resides in the endoplasmic reticulum membrane. It is found in the endoplasmic reticulum-Golgi intermediate compartment membrane. Its subcellular location is the golgi apparatus membrane. In terms of biological role, endoplasmic reticulum cargo receptor that mediates the export of lipoproteins by recruiting cargos into COPII vesicles to facilitate their secretion. Acts as a cargo receptor for lipoproteins bearing both APOB and APOA1, thereby regulating lipoprotein delivery and the maintenance of lipid homeostasis. This Takifugu rubripes (Japanese pufferfish) protein is Surfeit locus protein 4.